The chain runs to 338 residues: Ketol-acid reductoisomerase (NADP(+)) (338 aa).

Residues 1–181 (MKVFYDKDAD…GGGKAGIIET (181 aa)) form the KARI N-terminal Rossmann domain. Residues 24–27 (YGSQ), arginine 47, and serine 52 each bind NADP(+). The active site involves histidine 107. Glycine 133 serves as a coordination point for NADP(+). The 146-residue stretch at 182–327 (NFREETETDL…EKLRAMMPWI (146 aa)) folds into the KARI C-terminal knotted domain. The Mg(2+) site is built by aspartate 190, glutamate 194, glutamate 226, and glutamate 230. Serine 251 provides a ligand contact to substrate.

The protein belongs to the ketol-acid reductoisomerase family. The cofactor is Mg(2+).

It carries out the reaction (2R)-2,3-dihydroxy-3-methylbutanoate + NADP(+) = (2S)-2-acetolactate + NADPH + H(+). The catalysed reaction is (2R,3R)-2,3-dihydroxy-3-methylpentanoate + NADP(+) = (S)-2-ethyl-2-hydroxy-3-oxobutanoate + NADPH + H(+). Its pathway is amino-acid biosynthesis; L-isoleucine biosynthesis; L-isoleucine from 2-oxobutanoate: step 2/4. It functions in the pathway amino-acid biosynthesis; L-valine biosynthesis; L-valine from pyruvate: step 2/4. Functionally, involved in the biosynthesis of branched-chain amino acids (BCAA). Catalyzes an alkyl-migration followed by a ketol-acid reduction of (S)-2-acetolactate (S2AL) to yield (R)-2,3-dihydroxy-isovalerate. In the isomerase reaction, S2AL is rearranged via a Mg-dependent methyl migration to produce 3-hydroxy-3-methyl-2-ketobutyrate (HMKB). In the reductase reaction, this 2-ketoacid undergoes a metal-dependent reduction by NADPH to yield (R)-2,3-dihydroxy-isovalerate. The sequence is that of Ketol-acid reductoisomerase (NADP(+)) from Leptothrix cholodnii (strain ATCC 51168 / LMG 8142 / SP-6) (Leptothrix discophora (strain SP-6)).